Here is a 116-residue protein sequence, read N- to C-terminus: Large ribosomal subunit protein bL17 (116 aa).

The protein belongs to the bacterial ribosomal protein bL17 family. As to quaternary structure, part of the 50S ribosomal subunit. Contacts protein L32.

This is Large ribosomal subunit protein bL17 from Helicobacter hepaticus (strain ATCC 51449 / 3B1).